The sequence spans 209 residues: Ribosomal RNA large subunit methyltransferase E (209 aa).

Gly63, Trp65, Asp83, Asp99, and Asp124 together coordinate S-adenosyl-L-methionine. The Proton acceptor role is filled by Lys164.

It belongs to the class I-like SAM-binding methyltransferase superfamily. RNA methyltransferase RlmE family.

Its subcellular location is the cytoplasm. The catalysed reaction is uridine(2552) in 23S rRNA + S-adenosyl-L-methionine = 2'-O-methyluridine(2552) in 23S rRNA + S-adenosyl-L-homocysteine + H(+). In terms of biological role, specifically methylates the uridine in position 2552 of 23S rRNA at the 2'-O position of the ribose in the fully assembled 50S ribosomal subunit. The sequence is that of Ribosomal RNA large subunit methyltransferase E from Shewanella amazonensis (strain ATCC BAA-1098 / SB2B).